A 396-amino-acid chain; its full sequence is Elongation factor Tu 2 (396 aa).

The 197-residue stretch at 10 to 206 folds into the tr-type G domain; sequence KPHVNVGTIG…AIDSYIPEPE (197 aa). The interval 19 to 26 is G1; the sequence is GHIDHGKT. Residue 19 to 26 participates in GTP binding; that stretch reads GHIDHGKT. Mg(2+) is bound at residue Thr26. Residues 60–64 are G2; that stretch reads GITIA. The tract at residues 81–84 is G3; it reads DCPG. GTP-binding positions include 81–85 and 136–139; these read DCPGH and NKCD. Residues 136–139 form a G4 region; that stretch reads NKCD. A G5 region spans residues 174-176; it reads SAL.

Belongs to the TRAFAC class translation factor GTPase superfamily. Classic translation factor GTPase family. EF-Tu/EF-1A subfamily. As to quaternary structure, monomer.

It is found in the cytoplasm. The catalysed reaction is GTP + H2O = GDP + phosphate + H(+). Its function is as follows. GTP hydrolase that promotes the GTP-dependent binding of aminoacyl-tRNA to the A-site of ribosomes during protein biosynthesis. In Desulfotalea psychrophila (strain LSv54 / DSM 12343), this protein is Elongation factor Tu 2.